The sequence spans 477 residues: Delayed-rectifier potassium channel regulatory subunit KCNS2 (477 aa).

Residues 1–184 (MTRQSLWDLS…LALDNPGYSV (184 aa)) lie on the Cytoplasmic side of the membrane. Residues 185-206 (LSRVFSVLSILVVLGSIITMCL) traverse the membrane as a helical segment. Topologically, residues 207–225 (NSLPDFQIPDSQGNPGEDP) are extracellular. Residues 226 to 248 (RFEIVEHFGIAWFTFELVARFAV) form a helical membrane-spanning segment. The Cytoplasmic segment spans residues 249-259 (APDFLKFFKNA). The chain crosses the membrane as a helical span at residues 260–280 (LNLIDLMSIVPFYITLVVNLV). Residues 281 to 290 (VESSPTLANL) are Extracellular-facing. Residues 291–311 (GRVAQVLRLMRIFRILKLARH) traverse the membrane as a helical; Voltage-sensor segment. Over 312-326 (STGLRSLGATLKYSY) the chain is Cytoplasmic. The helical transmembrane segment at 327–348 (KEVGLLLLYLSVGISIFSVVAY) threads the bilayer. Over 349–361 (TIEKEENEGLATI) the chain is Extracellular. An intramembrane region (helical) is located at residues 362-373 (PACWWWATVSMT). The Selectivity filter motif lies at 374–379 (TVGYGD). Residues 374–381 (TVGYGDVV) lie within the membrane without spanning it. The Extracellular portion of the chain corresponds to 382–388 (PGTTAGK). The helical transmembrane segment at 389-417 (LTASACILAGILVVVLPITLIFNKFSHFY) threads the bilayer. Residues 418–477 (RRQKQLESAMRSCDFGDGMKEVPSVNLRDYYAHKVKSLMASLTNMSRSSPSELSLDDSLH) lie on the Cytoplasmic side of the membrane.

This sequence belongs to the potassium channel family. S (TC 1.A.1.2) subfamily. Kv9.2/KCNS2 sub-subfamily. In terms of assembly, heterotetramer with KCNB1 and KCNB2. Does not form homomultimers. Detected in brain, lung and in pulmonary arteries.

It localises to the cell membrane. Its function is as follows. Potassium channel regulatory subunit that modulate the delayed rectifier voltage-gated potassium channel activity of KCNB1 and KCNB2 by altering their kinetics, expression levels, and shifting the half-inactivation potential to more polarized values. While it does not form functional channels on its own, it can form functional heterotetrameric channels with KCNB1 and KCNB2. Each regulatory subunit has unique regulatory properties that can lead to extensive inhibition, significant changes in kinetics, and/or substantial shifts in the voltage dependencies of the inactivation process. The sequence is that of Delayed-rectifier potassium channel regulatory subunit KCNS2 from Rattus norvegicus (Rat).